A 144-amino-acid chain; its full sequence is MKTYDIVIASDHSGYELKSIIIEYLQKKSLSVYDCGTHNTQSVDYPDYAKKVVNNIIEKLARIGILIGDTGIGMSIAANRSSEIRAALCVNVSTAESAKAHNDANILVLGAKTVDHKTVFDIIDKFLATKFEGGRHSVRLLKIE.

Substrate is bound at residue histidine 12. The Proton donor role is filled by histidine 101. Arginine 135 is a substrate binding site.

It belongs to the LacAB/RpiB family.

This Rickettsia bellii (strain RML369-C) protein is Putative sugar phosphate isomerase RBE_0278.